The sequence spans 400 residues: MGLFKVIFTAVAALSAVDAAELLSSAKSKDIIPNSYLVVMKDSVSSAELDSHVSWVTGLHREGIAKRGAENLGGFKHSYKINGWHAYSGSFDSETLASILDNDKVDFVEHDRHVYISGFVTQKDAPSWGLGRVSHRMNGTRDYVYDESAGSGITFYGVDTGIDIHHPDFGGRAVWGINVVNGTKDNDRHGHGTHTAATAAGTKYGLAKKANVVAVKALNDYGAGLWSNIMKALEWCVNDAREKKILGKAVLNLSISGGKVVAANQAITNAAKAGIFVSVAAGNDNQDATNKSPASAENVCCAAATTIRDDKAKFSNYGSVVKLYAPGQGITSATPNNQTGVMSGTSMAAPHIGGVGATLMASKGIAPSAVCAELIKMASGPVLNPGANTTNKLLYNGSGK.

The first 19 residues, 1 to 19, serve as a signal peptide directing secretion; the sequence is MGLFKVIFTAVAALSAVDA. Residues 20-117 constitute a propeptide that is removed on maturation; that stretch reads AELLSSAKSK…VEHDRHVYIS (98 aa). The region spanning 35–116 is the Inhibitor I9 domain; the sequence is SYLVVMKDSV…FVEHDRHVYI (82 aa). Residues 127 to 400 enclose the Peptidase S8 domain; the sequence is SWGLGRVSHR…NKLLYNGSGK (274 aa). N-linked (GlcNAc...) asparagine glycosylation is present at Asn-138. Asp-159 functions as the Charge relay system in the catalytic mechanism. Residue Asn-181 is glycosylated (N-linked (GlcNAc...) asparagine). The active-site Charge relay system is the His-191. Asn-252 and Asn-337 each carry an N-linked (GlcNAc...) asparagine glycan. Residue Ser-346 is the Charge relay system of the active site. Residues Asn-388 and Asn-396 are each glycosylated (N-linked (GlcNAc...) asparagine).

This sequence belongs to the peptidase S8 family.

It localises to the secreted. Functionally, secreted subtilisin-like serine protease with keratinolytic activity that contributes to pathogenicity. The polypeptide is Subtilisin-like protease 11 (SUB11) (Arthroderma benhamiae (strain ATCC MYA-4681 / CBS 112371) (Trichophyton mentagrophytes)).